A 99-amino-acid chain; its full sequence is UPF0729 protein CG18508 (99 aa).

Residues 60 to 99 are disordered; it reads PGGKKTENVSDDDAEESENPPLNATAMAAETEVDESKKEI. The segment covering 68–77 has biased composition (acidic residues); sequence VSDDDAEESE. Ser69 is modified (phosphoserine).

The protein belongs to the UPF0729 family.

The chain is UPF0729 protein CG18508 from Drosophila melanogaster (Fruit fly).